The following is a 354-amino-acid chain: Lariat debranching enzyme (354 aa).

Residues Cys14, His16, and Asp45 each coordinate a divalent metal cation. RNA-binding residues include Lys59, Asn90, His91, Lys134, and His156. An a divalent metal cation-binding site is contributed by Asn90. The interval 130–158 (SGIYKSFDEKKPYTYPPSPNDVVSLFHTR) is lariat recognition loop. Residue His180 participates in a divalent metal cation binding. Residues Gly201, Asp205, His230, Met231, and His232 each coordinate RNA. An a divalent metal cation-binding site is contributed by His230. An a divalent metal cation-binding site is contributed by His232.

It belongs to the lariat debranching enzyme family. The cofactor is Fe(2+). Requires Zn(2+) as cofactor. Mn(2+) is required as a cofactor.

Its subcellular location is the cytoplasm. The protein localises to the perinuclear region. Its activity is regulated as follows. Active in presence of diverse metals including Fe(2+), Zn(2+) and Mn(2+). Binds two metal cations in two adjacent alpha and beta metal-binding pockets. The activity is the highest with Fe(2+) bound to the 2 metal-binding sites. The activity is slightly lower with Fe(2+) bound to the beta site and Zn(2+) to the alpha site and decreases further when only Zn(2+) is bound. No activity with Mn(2+). However, another study showed activity with Mn(2+) bound to the beta site and Zn(2+) to the alpha site. Mn(2+) appears unable to bind to the alpha site. Cleaves the 2'-5' phosphodiester linkage at the branch point of excised lariat intron RNA and converts them into linear molecules that can be subsequently degraded, thereby facilitating ribonucleotide turnover. The polypeptide is Lariat debranching enzyme (Entamoeba histolytica (strain ATCC 30459 / HM-1:IMSS / ABRM)).